The sequence spans 208 residues: MSNLLVLNSSANTGESVSRILIDEAVNQILTAAPGTDVVRRDLGANPVPHLTTANLAGVRGTPSTSEELAARALSDELIAELKAAGTVIIAAPMYNFSVPTSLRSWFDFVLRAGETFKYSEAGPEGLLKGKKVVVLTSRGGLYSEGPAAAADFQEPYLRHLLGFVGITDVTFIHAEKIGFGPEARAAAITGAKGQIAKVAQTFSTVAA.

FMN contacts are provided by residues Ser10, 16 to 18, 94 to 97, and 138 to 141; these read SVS, MYNF, and SRGG.

Belongs to the azoreductase type 1 family. As to quaternary structure, homodimer. The cofactor is FMN.

It carries out the reaction 2 a quinone + NADH + H(+) = 2 a 1,4-benzosemiquinone + NAD(+). The enzyme catalyses N,N-dimethyl-1,4-phenylenediamine + anthranilate + 2 NAD(+) = 2-(4-dimethylaminophenyl)diazenylbenzoate + 2 NADH + 2 H(+). Functionally, quinone reductase that provides resistance to thiol-specific stress caused by electrophilic quinones. Also exhibits azoreductase activity. Catalyzes the reductive cleavage of the azo bond in aromatic azo compounds to the corresponding amines. The sequence is that of FMN-dependent NADH:quinone oxidoreductase from Hyphomonas neptunium (strain ATCC 15444).